The chain runs to 936 residues: Isoleucine--tRNA ligase (936 aa).

The 'HIGH' region motif lies at 58–68 (PYANGRAHLGT). Glutamate 561 is a binding site for L-isoleucyl-5'-AMP. A 'KMSKS' region motif is present at residues 602–606 (KMSKS). Residue lysine 605 participates in ATP binding. The Zn(2+) site is built by cysteine 899, cysteine 902, cysteine 919, and cysteine 922.

It belongs to the class-I aminoacyl-tRNA synthetase family. IleS type 1 subfamily. As to quaternary structure, monomer. Zn(2+) is required as a cofactor.

The protein resides in the cytoplasm. It catalyses the reaction tRNA(Ile) + L-isoleucine + ATP = L-isoleucyl-tRNA(Ile) + AMP + diphosphate. Functionally, catalyzes the attachment of isoleucine to tRNA(Ile). As IleRS can inadvertently accommodate and process structurally similar amino acids such as valine, to avoid such errors it has two additional distinct tRNA(Ile)-dependent editing activities. One activity is designated as 'pretransfer' editing and involves the hydrolysis of activated Val-AMP. The other activity is designated 'posttransfer' editing and involves deacylation of mischarged Val-tRNA(Ile). The polypeptide is Isoleucine--tRNA ligase (Coxiella burnetii (strain RSA 331 / Henzerling II)).